A 239-amino-acid polypeptide reads, in one-letter code: Small ribosomal subunit protein uS3 (239 aa).

Residues 39 to 107 (VRQVLRKKMS…SVHINVIEVR (69 aa)) form the KH type-2 domain. The segment at 217–239 (KQDDISRGDRNADRSSRRSREVR) is disordered.

The protein belongs to the universal ribosomal protein uS3 family. Part of the 30S ribosomal subunit. Forms a tight complex with proteins S10 and S14.

Functionally, binds the lower part of the 30S subunit head. Binds mRNA in the 70S ribosome, positioning it for translation. This Xylella fastidiosa (strain 9a5c) protein is Small ribosomal subunit protein uS3.